A 581-amino-acid chain; its full sequence is Arginine--tRNA ligase (581 aa).

A 'HIGH' region motif is present at residues 126–136; it reads PNLAKEMHVGH.

Belongs to the class-I aminoacyl-tRNA synthetase family. Monomer.

The protein localises to the cytoplasm. The catalysed reaction is tRNA(Arg) + L-arginine + ATP = L-arginyl-tRNA(Arg) + AMP + diphosphate. The polypeptide is Arginine--tRNA ligase (Shewanella putrefaciens (strain CN-32 / ATCC BAA-453)).